The primary structure comprises 212 residues: uncharacterized protein (212 aa).

C52 serves as the catalytic Acyl-thioester intermediate. Active-site residues include H89 and D104.

This sequence belongs to the arylamine N-acetyltransferase family.

This is an uncharacterized protein from Acanthamoeba polyphaga (Amoeba).